The chain runs to 1627 residues: Pappalysin-1 (1627 aa).

A signal peptide spans 1–22 (MRLWSWVLHLGLLSAALGCGLA). Positions 23-81 (ERPRRARRDPRAGRPPRPAAGPATCATRAARGRRASPPPPPPPGGAWEAVRVPRRRQQR) are excised as a propeptide. The tract at residues 23-99 (ERPRRARRDP…PSPPSRALYF (77 aa)) is disordered. A compositionally biased stretch (low complexity) spans 42-51 (AGPATCATRA). Disulfide bonds link Cys144–Cys235, Cys327–Cys622, Cys332–Cys657, Cys414–Cys428, Cys424–Cys440, Cys457–Cys473, Cys474–Cys485, Cys583–Cys600, Cys587–Cys612, Cys710–Cys878, Cys713–Cys881, Cys753–Cys835, Cys775–Cys781, Cys947–Cys975, Cys960–Cys971, Cys983–Cys990, and Cys999–Cys1011. The metalloprotease stretch occupies residues 272–583 (METHGAHTAL…FRGISEIQSC (312 aa)). Asn390 and Asn402 each carry an N-linked (GlcNAc...) asparagine glycan. Asn429 carries an N-linked (GlcNAc...) asparagine glycan. Residue Asn480 is glycosylated (N-linked (GlcNAc...) asparagine). His562 serves as a coordination point for Zn(2+). The active site involves Glu563. Residues His566 and His572 each coordinate Zn(2+). N-linked (GlcNAc...) asparagine glycans are attached at residues Asn601, Asn619, and Asn725. A disordered region spans residues 733–754 (SPSGHWSPREAEGHPDVEQPCK). A compositionally biased stretch (basic and acidic residues) spans 739–751 (SPREAEGHPDVEQ). N-linked (GlcNAc...) asparagine glycosylation occurs at Asn825. An N-linked (GlcNAc...) asparagine glycan is attached at Asn1026. 19 cysteine pairs are disulfide-bonded: Cys1036–Cys1070, Cys1051–Cys1139, Cys1192–Cys1205, Cys1215–Cys1269, Cys1227–Cys1238, Cys1242–Cys1280, Cys1285–Cys1329, Cys1300–Cys1310, Cys1314–Cys1342, Cys1346–Cys1399, Cys1362–Cys1373, Cys1377–Cys1410, Cys1415–Cys1458, Cys1428–Cys1438, Cys1442–Cys1471, Cys1478–Cys1539, Cys1492–Cys1502, Cys1506–Cys1554, and Cys1558–Cys1576. Sushi domains follow at residues 1213-1282 (TDCP…ACEP), 1283-1344 (VDCS…LCEL), 1345-1412 (MCLA…ACVP), 1413-1473 (VTCD…VCQE), and 1476-1556 (GQCS…HCVK). N-linked (GlcNAc...) asparagine glycosylation is found at Asn1222 and Asn1226. Asn1323 carries N-linked (GlcNAc...) asparagine glycosylation. The N-linked (GlcNAc...) asparagine glycan is linked to Asn1465. Asn1519 carries an N-linked (GlcNAc...) asparagine glycan.

The protein belongs to the peptidase M43B family. As to quaternary structure, homodimer; disulfide-linked. In pregnancy serum, predominantly found as a disulfide-linked 2:2 heterotetramer with the proform of PRG2. It depends on Zn(2+) as a cofactor. There appear to be no free sulfhydryl groups. In terms of tissue distribution, high levels in placenta and pregnancy serum. In placenta, expressed in X cells in septa and anchoring villi, and in syncytiotrophoblasts in the chorionic villi. Lower levels are found in a variety of other tissues including kidney, myometrium, endometrium, ovaries, breast, prostate, bone marrow, colon, fibroblasts and osteoblasts.

Its subcellular location is the secreted. It carries out the reaction Cleavage of the 135-Met-|-Lys-136 bond in insulin-like growth factor binding protein (IGFBP)-4, and the 143-Ser-|-Lys-144 bond in IGFBP-5.. Inhibited by complexation with the proform of PRG2. Its function is as follows. Metalloproteinase which specifically cleaves IGFBP-4 and IGFBP-5, resulting in release of bound IGF. Cleavage of IGFBP-4 is dramatically enhanced by the presence of IGF, whereas cleavage of IGFBP-5 is slightly inhibited by the presence of IGF. The chain is Pappalysin-1 (PAPPA) from Homo sapiens (Human).